The sequence spans 389 residues: MTTFFISKVNGPVNKSLIWLKIHIYEFFLLKFMLLFPPTVCSTNPDCFKSNRIVNCFLDESPYFFRWVGFSLQKTQVAKIILCLIAVICCELSLTSNQINTSQAYPIFAQQNYENPREATGRIVCANCHLAQKPVELSLPQAVMPDTVFEAVVKIPYDQEIQQVLGNGKKGGLNVGAVLILPEGFSLAPPDRIPEEMKNKVGKLYFQSYNPEKPNILVIGPVPGKTYNEMVFPILSPNPETNKNISYLKYPIYLGGNRGRGQIYPDGSKSNNTVYNASTGGTIVDITPASKKGGYNLTIETANGEQIVDKIPPGPELIVSVGQSIKPDQALTNNPNVGGFGQQDGEIVLQNPVRLQALIVFFIFVILTQLFLVLKKKQFEKVQLAEMNF.

An N-terminal signal peptide occupies residues 1–42 (MTTFFISKVNGPVNKSLIWLKIHIYEFFLLKFMLLFPPTVCS). The heme site is built by Tyr-105, Cys-125, Cys-128, and His-129. A helical transmembrane segment spans residues 355–375 (LQALIVFFIFVILTQLFLVLK).

It belongs to the cytochrome f family. As to quaternary structure, the 4 large subunits of the cytochrome b6-f complex are cytochrome b6, subunit IV (17 kDa polypeptide, petD), cytochrome f and the Rieske protein, while the 4 small subunits are PetG, PetL, PetM and PetN. The complex functions as a dimer. Requires heme as cofactor.

It localises to the plastid. The protein localises to the chloroplast thylakoid membrane. Its function is as follows. Component of the cytochrome b6-f complex, which mediates electron transfer between photosystem II (PSII) and photosystem I (PSI), cyclic electron flow around PSI, and state transitions. This chain is Cytochrome f, found in Pleurastrum terricola (Filamentous green alga).